The sequence spans 418 residues: Gamma-glutamyl phosphate reductase (418 aa).

A compositionally biased stretch (basic and acidic residues) spans 1–18; the sequence is MAIQDEMRQVAEGAREAS. The tract at residues 1–22 is disordered; that stretch reads MAIQDEMRQVAEGAREASRTLS.

The protein belongs to the gamma-glutamyl phosphate reductase family.

It localises to the cytoplasm. The catalysed reaction is L-glutamate 5-semialdehyde + phosphate + NADP(+) = L-glutamyl 5-phosphate + NADPH + H(+). Its pathway is amino-acid biosynthesis; L-proline biosynthesis; L-glutamate 5-semialdehyde from L-glutamate: step 2/2. Its function is as follows. Catalyzes the NADPH-dependent reduction of L-glutamate 5-phosphate into L-glutamate 5-semialdehyde and phosphate. The product spontaneously undergoes cyclization to form 1-pyrroline-5-carboxylate. This is Gamma-glutamyl phosphate reductase from Syntrophus aciditrophicus (strain SB).